An 876-amino-acid polypeptide reads, in one-letter code: Alanine--tRNA ligase (876 aa).

Zn(2+) is bound by residues H565, H569, C667, and H671.

It belongs to the class-II aminoacyl-tRNA synthetase family. The cofactor is Zn(2+).

The protein resides in the cytoplasm. The catalysed reaction is tRNA(Ala) + L-alanine + ATP = L-alanyl-tRNA(Ala) + AMP + diphosphate. Catalyzes the attachment of alanine to tRNA(Ala) in a two-step reaction: alanine is first activated by ATP to form Ala-AMP and then transferred to the acceptor end of tRNA(Ala). Also edits incorrectly charged Ser-tRNA(Ala) and Gly-tRNA(Ala) via its editing domain. This Staphylococcus aureus (strain bovine RF122 / ET3-1) protein is Alanine--tRNA ligase.